A 220-amino-acid polypeptide reads, in one-letter code: MFELRKLPYDTNAFGDFLSAETFSYHHGKHHNTYVTNLNNLIKYTEFASKDLVSIIKSSSGGVFNNAAQVYNHDFYFDCIKPITGCGCGGSCQSMDANLQAALEKEFGSLENFKAEFIKGATGVFGSGWFWLVYNTKNQKLEFVGTSNAATPITEDKVPLLVVDVWEHAYYVDHRNARPAYLEKFYAHINWEFVAKAYEWALKEGMGSVSFYANELHPVK.

Residues His26, His73, Asp164, and His168 each coordinate Fe cation.

It belongs to the iron/manganese superoxide dismutase family. Homodimer. Fe cation is required as a cofactor.

It carries out the reaction 2 superoxide + 2 H(+) = H2O2 + O2. Its function is as follows. Destroys superoxide anion radicals which are normally produced within the cells and which are toxic to biological systems. The protein is Superoxide dismutase [Fe] (sodB) of Campylobacter coli.